A 205-amino-acid chain; its full sequence is Large ribosomal subunit protein uL4 (205 aa).

The disordered stretch occupies residues arginine 53 to isoleucine 77. The segment covering glycine 59–glycine 70 has biased composition (basic residues).

The protein belongs to the universal ribosomal protein uL4 family. As to quaternary structure, part of the 50S ribosomal subunit.

In terms of biological role, one of the primary rRNA binding proteins, this protein initially binds near the 5'-end of the 23S rRNA. It is important during the early stages of 50S assembly. It makes multiple contacts with different domains of the 23S rRNA in the assembled 50S subunit and ribosome. Forms part of the polypeptide exit tunnel. This is Large ribosomal subunit protein uL4 from Acidithiobacillus ferrooxidans (strain ATCC 23270 / DSM 14882 / CIP 104768 / NCIMB 8455) (Ferrobacillus ferrooxidans (strain ATCC 23270)).